The sequence spans 540 residues: Intestinal-type alkaline phosphatase 1 (540 aa).

Positions 1-20 (MQGDWVLLLLLGLRIHLSFG) are cleaved as a signal peptide. D62 lines the Mg(2+) pocket. Positions 62 and 112 each coordinate Zn(2+). S112 functions as the Phosphoserine intermediate in the catalytic mechanism. Residues C141 and C203 are joined by a disulfide bond. The N-linked (GlcNAc...) asparagine glycan is linked to N142. S175 serves as a coordination point for Mg(2+). Positions 236, 289, and 290 each coordinate Ca(2+). N-linked (GlcNAc...) asparagine glycosylation occurs at N301. D305 contributes to the Ca(2+) binding site. E331 contributes to the Mg(2+) binding site. D336, H340, D377, and H378 together coordinate Zn(2+). N-linked (GlcNAc...) asparagine glycosylation occurs at N428. Residue H452 participates in Zn(2+) binding. A disulfide bridge connects residues C487 and C494. N511 carries GPI-anchor amidated asparagine lipidation. A propeptide spans 512 to 540 (SAITMNNVLLSLQLLVSMLLLVGTALVVS) (removed in mature form).

The protein belongs to the alkaline phosphatase family. As to quaternary structure, homodimer. Mg(2+) serves as cofactor. It depends on Zn(2+) as a cofactor. Requires Ca(2+) as cofactor.

The protein localises to the cell membrane. It carries out the reaction a phosphate monoester + H2O = an alcohol + phosphate. Functionally, alkaline phosphatase that can hydrolyze various phosphate compounds. The polypeptide is Intestinal-type alkaline phosphatase 1 (Alpi) (Rattus norvegicus (Rat)).